Consider the following 121-residue polypeptide: B-box domain protein 31 (121 aa).

The segment at 26–72 (SVPVRCELCDGDASVFCEADSAFLCRKCDRWVHGANFLAWRHVRRVL) adopts a B box-type; atypical zinc-finger fold. The short motif at 117–121 (PFVFL) is the PFVFL element.

As to expression, highly expressed in shoot apical meristems and in vascular tissues of leaves. Also detected in petioles.

Its function is as follows. Developmental regulator acting by forming heterodimeric complexes, that sequester CO and CO-like (COL) proteins into non-functional complexes. Involved in the CO-mediated long-day flowering-promotion pathway. Engages CO and the transcriptional repressor TPL in a tripartite complex. The polypeptide is B-box domain protein 31 (Arabidopsis thaliana (Mouse-ear cress)).